The primary structure comprises 257 residues: Ribosome maturation factor RimP (257 aa).

Positions Leu-182–His-257 are disordered. A compositionally biased stretch (acidic residues) spans Asp-191–Ala-205. Positions Lys-224 to Arg-236 are enriched in low complexity.

This sequence belongs to the RimP family.

The protein localises to the cytoplasm. In terms of biological role, required for maturation of 30S ribosomal subunits. The protein is Ribosome maturation factor RimP of Methylobacterium radiotolerans (strain ATCC 27329 / DSM 1819 / JCM 2831 / NBRC 15690 / NCIMB 10815 / 0-1).